A 507-amino-acid chain; its full sequence is GMP synthase [glutamine-hydrolyzing] 1 (507 aa).

The Glutamine amidotransferase type-1 domain maps to 4 to 193; the sequence is KIIILDFGSQ…VVDVCGCKQD (190 aa). Residue cysteine 79 is the Nucleophile of the active site. Residues histidine 167 and glutamate 169 contribute to the active site. One can recognise a GMPS ATP-PPase domain in the interval 194–382; it reads WSPASFIEST…LGMPEHLITR (189 aa). Residue 221–227 participates in ATP binding; that stretch reads SGGVDSS.

Homodimer.

It carries out the reaction XMP + L-glutamine + ATP + H2O = GMP + L-glutamate + AMP + diphosphate + 2 H(+). It participates in purine metabolism; GMP biosynthesis; GMP from XMP (L-Gln route): step 1/1. Functionally, catalyzes the synthesis of GMP from XMP. The sequence is that of GMP synthase [glutamine-hydrolyzing] 1 (guaA1) from Bacteroides thetaiotaomicron (strain ATCC 29148 / DSM 2079 / JCM 5827 / CCUG 10774 / NCTC 10582 / VPI-5482 / E50).